Reading from the N-terminus, the 122-residue chain is MIKGIGIDIIEIDRIGQAISKNNGFMDRIFTLNEQRLFEEKNNIMETIAGHFAAKEATAKALGTGIRNMKWKDIEILKDSLGKPYVELHNNAKTLADSMHIEQILISISHNKSNAVAQAIAI.

2 residues coordinate Mg(2+): Asp-8 and Glu-56.

Belongs to the P-Pant transferase superfamily. AcpS family. It depends on Mg(2+) as a cofactor.

The protein localises to the cytoplasm. The catalysed reaction is apo-[ACP] + CoA = holo-[ACP] + adenosine 3',5'-bisphosphate + H(+). Its function is as follows. Transfers the 4'-phosphopantetheine moiety from coenzyme A to a Ser of acyl-carrier-protein. In Alkaliphilus oremlandii (strain OhILAs) (Clostridium oremlandii (strain OhILAs)), this protein is Holo-[acyl-carrier-protein] synthase.